The primary structure comprises 939 residues: Isoleucine--tRNA ligase (939 aa).

Residues 57–67 (PYANGHIHLGH) carry the 'HIGH' region motif. Glu561 provides a ligand contact to L-isoleucyl-5'-AMP. The 'KMSKS' region motif lies at 602 to 606 (KMSKS). Lys605 is a binding site for ATP. Zn(2+) is bound by residues Cys903, Cys906, Cys923, and Cys926.

Belongs to the class-I aminoacyl-tRNA synthetase family. IleS type 1 subfamily. As to quaternary structure, monomer. Requires Zn(2+) as cofactor.

It localises to the cytoplasm. It carries out the reaction tRNA(Ile) + L-isoleucine + ATP = L-isoleucyl-tRNA(Ile) + AMP + diphosphate. Its function is as follows. Catalyzes the attachment of isoleucine to tRNA(Ile). As IleRS can inadvertently accommodate and process structurally similar amino acids such as valine, to avoid such errors it has two additional distinct tRNA(Ile)-dependent editing activities. One activity is designated as 'pretransfer' editing and involves the hydrolysis of activated Val-AMP. The other activity is designated 'posttransfer' editing and involves deacylation of mischarged Val-tRNA(Ile). In Desulfotalea psychrophila (strain LSv54 / DSM 12343), this protein is Isoleucine--tRNA ligase.